We begin with the raw amino-acid sequence, 551 residues long: MPQKVLITSALPYANGPLHFGHIAGVYLPADVYARFRRLLGDDVLYICGSDEFGIAITLNADREGLGYQEYVDMYHKLHKDTFEKLGFALDFFSRTTNPFHAELVQDFYSQLKASGLIENRISEQLYSEQEQRFLADRYVEGTCPRCGFDHARGDECQSCGADYEAIDLIDPKSKISGVELVKKETEHSYFLLDRMKDALLSFIQGCYLPDHVRKFVVDYIEHVRSRAITRDLSWGIPVPDFPGKVFYVWFDAPIGYISGTMEWAASQGNPDEWKRFWLEDGVEYVQFIGKDNLPFHSVVFPAMELGQKLDYKKVDALVVSEFYLLEGRQFSKSEGNYVDMDKFLSSYSLDKLRYVLAATAPETSDSEFTFLDFKTRCNSELVGKFGNFINRVLAFAEKNHYDKLSYHSVVLEDSDRAFLEEVRQLVRDAEKCYREYSLRKATSVIMSLAALGNVYFNQQAPWKLLKEGTRERVEAILFCACYCQKLLALISYPIIPESAVAIWEMISPKSLENCNLDTMYARDLWKEEILDVINEEFHLKSPRLLFTTVE.

A 'HIGH' region motif is present at residues 12–22 (PYANGPLHFGH). Residues Cys-144, Cys-147, Cys-157, and Cys-160 each coordinate Zn(2+). Positions 330 to 334 (QFSKS) match the 'KMSKS' region motif. Lys-333 lines the ATP pocket.

This sequence belongs to the class-I aminoacyl-tRNA synthetase family. MetG type 1 subfamily. As to quaternary structure, monomer. Zn(2+) serves as cofactor.

Its subcellular location is the cytoplasm. The enzyme catalyses tRNA(Met) + L-methionine + ATP = L-methionyl-tRNA(Met) + AMP + diphosphate. Its function is as follows. Is required not only for elongation of protein synthesis but also for the initiation of all mRNA translation through initiator tRNA(fMet) aminoacylation. The chain is Methionine--tRNA ligase (metG) from Chlamydia pneumoniae (Chlamydophila pneumoniae).